Reading from the N-terminus, the 407-residue chain is DNA primase DnaG (407 aa).

The 77-residue stretch at 172–248 (DWIIVVEGRA…HIDYVARAPP (77 aa)) folds into the Toprim domain. Positions 178, 222, and 224 each coordinate Mg(2+). Residues 279 to 304 (AGAEKTEAAAPPPQQPTAPPAAPSQQ) are disordered. Residues 288–300 (APPPQQPTAPPAA) show a composition bias toward pro residues.

This sequence belongs to the archaeal DnaG primase family. As to quaternary structure, forms a ternary complex with MCM helicase and DNA. Component of the archaeal exosome complex. Mg(2+) serves as cofactor.

It catalyses the reaction ssDNA + n NTP = ssDNA/pppN(pN)n-1 hybrid + (n-1) diphosphate.. Its function is as follows. RNA polymerase that catalyzes the synthesis of short RNA molecules used as primers for DNA polymerase during DNA replication. Also part of the exosome, which is a complex involved in RNA degradation. Acts as a poly(A)-binding protein that enhances the interaction between heteromeric, adenine-rich transcripts and the exosome. This is DNA primase DnaG from Pyrobaculum calidifontis (strain DSM 21063 / JCM 11548 / VA1).